Consider the following 585-residue polypeptide: Glycerol-3-phosphate dehydrogenase (585 aa).

37–65 (DVVVIGGGVVGSGCALDAATRGLKVALVE) provides a ligand contact to FAD.

The protein belongs to the FAD-dependent glycerol-3-phosphate dehydrogenase family. It depends on FAD as a cofactor.

It localises to the cytoplasm. The enzyme catalyses a quinone + sn-glycerol 3-phosphate = dihydroxyacetone phosphate + a quinol. This is Glycerol-3-phosphate dehydrogenase (glpD) from Mycobacterium leprae (strain TN).